A 542-amino-acid chain; its full sequence is CTP synthase (542 aa).

Residues 1-265 (MARYVFITGG…DSEVLSAFGI (265 aa)) are amidoligase domain. Ser-13 contributes to the CTP binding site. Ser-13 lines the UTP pocket. 14–19 (SLGKGI) is an ATP binding site. Residue Tyr-54 coordinates L-glutamine. Asp-71 lines the ATP pocket. Asp-71 and Glu-139 together coordinate Mg(2+). CTP contacts are provided by residues 146–148 (DIE), 186–191 (KTKPTQ), and Lys-222. UTP is bound by residues 186-191 (KTKPTQ) and Lys-222. The Glutamine amidotransferase type-1 domain occupies 291–541 (TIAVVGKYTG…IEAAIEQSRL (251 aa)). Gly-353 serves as a coordination point for L-glutamine. Cys-380 functions as the Nucleophile; for glutamine hydrolysis in the catalytic mechanism. L-glutamine contacts are provided by residues 381 to 384 (FGMQ), Glu-404, and Arg-469. Active-site residues include His-514 and Glu-516.

The protein belongs to the CTP synthase family. In terms of assembly, homotetramer.

The catalysed reaction is UTP + L-glutamine + ATP + H2O = CTP + L-glutamate + ADP + phosphate + 2 H(+). The enzyme catalyses L-glutamine + H2O = L-glutamate + NH4(+). It carries out the reaction UTP + NH4(+) + ATP = CTP + ADP + phosphate + 2 H(+). It participates in pyrimidine metabolism; CTP biosynthesis via de novo pathway; CTP from UDP: step 2/2. Its activity is regulated as follows. Allosterically activated by GTP, when glutamine is the substrate; GTP has no effect on the reaction when ammonia is the substrate. The allosteric effector GTP functions by stabilizing the protein conformation that binds the tetrahedral intermediate(s) formed during glutamine hydrolysis. Inhibited by the product CTP, via allosteric rather than competitive inhibition. In terms of biological role, catalyzes the ATP-dependent amination of UTP to CTP with either L-glutamine or ammonia as the source of nitrogen. Regulates intracellular CTP levels through interactions with the four ribonucleotide triphosphates. This is CTP synthase from Brucella canis (strain ATCC 23365 / NCTC 10854 / RM-666).